The primary structure comprises 652 residues: Zinc finger protein 432 (652 aa).

The region spanning 8–79 (LTLEDVTVEF…EDERHSRICP (72 aa)) is the KRAB domain. Tyr-41 carries the post-translational modification 3'-nitrotyrosine. ADP-ribosylserine is present on residues Ser-139 and Ser-164. 16 C2H2-type zinc fingers span residues 205–227 (HVCSECGKAFVKKSQLTDHERVH), 233–255 (YGCTLCAKVFSRKSRLNEHQRIH), 261–283 (FICSECGKVFTMKSRLIEHQRTH), 289–311 (YICNECGKGFPGKRNLIVHQRNH), 317–339 (YICSECGKGFTGKSMLIIHQRTH), 345–367 (YICSECGKGFTTKHYVIIHQRNH), 373–395 (YICNECGKGFTMKSRMIEHQRTH), 401–423 (YICSECGKGFPRKSNLIVHQRNH), 429–451 (YLCSECGKGFTVKSMLIIHQRTH), 457–479 (YTCSECGKGFPLKSRLIVHQRTH), 485–507 (YRCSECGKGFIVNSGLMLHQRTH), 513–535 (YICNECGKGFAFKSNLVVHQRTH), 541–563 (FMCSECGKGFTMKRYLIVHQQIH), 567–591 (KSCICSECGRGFAKETELALHKQVH), 597–619 (YGCNECGKGFTMKSRLIVHQRTH), and 625–647 (FVCSECRKAFSSKRNLIVHQRTH). The residue at position 246 (Ser-246) is an ADP-ribosylserine. Ser-330 carries the post-translational modification ADP-ribosylserine. Ser-414 bears the ADP-ribosylserine mark.

It belongs to the krueppel C2H2-type zinc-finger protein family. As to quaternary structure, interacts with PARP1 and several chromatin remodeling proteins; the interaction with PARP1 reshapes ZNF432 interacting proteins. Interacts with TRIM28; the interaction is independent of PARP1.

It is found in the nucleus. In terms of biological role, homologous recombination repressor that functions as a poly(ADP-ribose) (PAR) reader regulating DNA damage response and PARP inhibition. Once recruited to DNA lesions via DNA-, in a PAR-dependent mechanism, stimulates PARP1 activity. Binds preferentially ssDNA and inhibits EXO1-mediated resection, probably through a PAR-independent DNA-binding mechanism. This chain is Zinc finger protein 432, found in Homo sapiens (Human).